Consider the following 89-residue polypeptide: Small ribosomal subunit protein uS15 (89 aa).

The protein belongs to the universal ribosomal protein uS15 family. In terms of assembly, part of the 30S ribosomal subunit. Forms a bridge to the 50S subunit in the 70S ribosome, contacting the 23S rRNA.

In terms of biological role, one of the primary rRNA binding proteins, it binds directly to 16S rRNA where it helps nucleate assembly of the platform of the 30S subunit by binding and bridging several RNA helices of the 16S rRNA. Forms an intersubunit bridge (bridge B4) with the 23S rRNA of the 50S subunit in the ribosome. The protein is Small ribosomal subunit protein uS15 of Mycobacterium marinum (strain ATCC BAA-535 / M).